The chain runs to 382 residues: V-type proton ATPase subunit C 1 (382 aa).

Residue threonine 2 is modified to N-acetylthreonine.

Belongs to the V-ATPase C subunit family. In terms of assembly, V-ATPase is a heteromultimeric enzyme made up of two complexes: the ATP-hydrolytic V1 complex and the proton translocation V0 complex. The V1 complex consists of three catalytic AB heterodimers that form a heterohexamer, three peripheral stalks each consisting of EG heterodimers, one central rotor including subunits D and F, and the regulatory subunits C and H. The proton translocation complex V0 consists of the proton transport subunit a, a ring of proteolipid subunits c9c'', rotary subunit d, subunits e and f, and the accessory subunits ATP6AP1/Ac45 and ATP6AP2/PRR. As to expression, expressed in brain (at protein level).

The protein localises to the cytoplasmic vesicle. It localises to the secretory vesicle. Its subcellular location is the synaptic vesicle membrane. The protein resides in the clathrin-coated vesicle membrane. Functionally, subunit of the V1 complex of vacuolar(H+)-ATPase (V-ATPase), a multisubunit enzyme composed of a peripheral complex (V1) that hydrolyzes ATP and a membrane integral complex (V0) that translocates protons. V-ATPase is responsible for acidifying and maintaining the pH of intracellular compartments and in some cell types, is targeted to the plasma membrane, where it is responsible for acidifying the extracellular environment. Subunit C is necessary for the assembly of the catalytic sector of the enzyme and is likely to have a specific function in its catalytic activity. This Bos taurus (Bovine) protein is V-type proton ATPase subunit C 1 (ATP6V1C1).